The chain runs to 352 residues: Pejvakin (352 aa).

The protein belongs to the gasdermin family. In terms of assembly, interacts with MAP1LC3B; interaction is direct. Interacts with IQGAP1. Interacts with ROCK2. Interacts with TRIOBP. In ear, it is detected in the organ of Corti and the spiral ganglion within the cochlea in the sensory areas of the vestibule (cristae ampullares of the semicircular ducts, and maculae of the saccule and utricle) and in the first 3 relays (cochlear nuclei, superior olivary complex and inferior colliculus) of the afferent auditory pathway. Detected in hair cells of the cochlea and vestibule but not in neurons. In the afferent auditory pathway, it is present in the cell bodies of neurons but not in fiber bundles such as the trapezoid body in the brainstem. Also detected in spiral ganglion cells, which form the auditory nerve and project to the cochlear nuclei in the brainstem. Also present in the cochlear nuclei, the superior olive and the inferior colliculus (at protein level). Expressed in all the adult organs tested: brain, eye, inner ear, heart, lung, kidney, liver, intestine, testis and weakly in skeletal muscle.

The protein localises to the peroxisome membrane. It localises to the cell projection. Its subcellular location is the cilium. Its function is as follows. Peroxisome-associated protein required to protect auditory hair cells against noise-induced damage. Acts by regulating noise-induced peroxisome proliferation in auditory hair cells and neurons, and promoting autophagic degradation of damaged peroxisomes (pexophagy). Noise overexposure increases reactive oxygen species (ROS) levels, causing oxidative damage to auditory hair cells and resulting in hearing loss. PJVK acts as a ROS sensor that recruits the autophagy machinery to trigger pexophagy of peroxisomes damaged by oxidative stress. In addition to pexophagy, also required to promote peroxisome proliferation in response to sound overstimulation. This Mus musculus (Mouse) protein is Pejvakin.